The sequence spans 172 residues: MKRDKKEQVVQEVAEKIGRSQGIYLTEYQGLNVAKMAELRNEFRKAGIEYKVVKNTLVKQALLQLAQADKLADGLKSTTAVAFGYDDPIAPAKIIRKFSKTNEALKFKMAAIDGIVYGDDKLVMLSEMLSKTENIGRTAGLINNVVSSVPMVVNAVMRNLVSVLDQVAKQKQ.

The protein belongs to the universal ribosomal protein uL10 family. As to quaternary structure, part of the ribosomal stalk of the 50S ribosomal subunit. The N-terminus interacts with L11 and the large rRNA to form the base of the stalk. The C-terminus forms an elongated spine to which L12 dimers bind in a sequential fashion forming a multimeric L10(L12)X complex.

In terms of biological role, forms part of the ribosomal stalk, playing a central role in the interaction of the ribosome with GTP-bound translation factors. The sequence is that of Large ribosomal subunit protein uL10 from Chlorobium limicola (strain DSM 245 / NBRC 103803 / 6330).